The chain runs to 399 residues: Tryptophan synthase beta chain (399 aa).

Lysine 90 carries the post-translational modification N6-(pyridoxal phosphate)lysine.

Belongs to the TrpB family. As to quaternary structure, tetramer of two alpha and two beta chains. Requires pyridoxal 5'-phosphate as cofactor.

It catalyses the reaction (1S,2R)-1-C-(indol-3-yl)glycerol 3-phosphate + L-serine = D-glyceraldehyde 3-phosphate + L-tryptophan + H2O. It participates in amino-acid biosynthesis; L-tryptophan biosynthesis; L-tryptophan from chorismate: step 5/5. Functionally, the beta subunit is responsible for the synthesis of L-tryptophan from indole and L-serine. The chain is Tryptophan synthase beta chain from Lactiplantibacillus plantarum (strain ATCC BAA-793 / NCIMB 8826 / WCFS1) (Lactobacillus plantarum).